A 562-amino-acid polypeptide reads, in one-letter code: AT-rich interactive domain-containing protein 1 (562 aa).

Residues 43-136 (KELISLFRPL…YLDAFGRWLN (94 aa)) form the ARID domain. An ELM2 domain is found at 358–448 (PCALVGSKFQ…KLELGPAFYM (91 aa)).

Its subcellular location is the nucleus. This is AT-rich interactive domain-containing protein 1 (ARID1) from Arabidopsis thaliana (Mouse-ear cress).